We begin with the raw amino-acid sequence, 118 residues long: Large ribosomal subunit protein bL19 (118 aa).

This sequence belongs to the bacterial ribosomal protein bL19 family.

In terms of biological role, this protein is located at the 30S-50S ribosomal subunit interface and may play a role in the structure and function of the aminoacyl-tRNA binding site. The sequence is that of Large ribosomal subunit protein bL19 from Campylobacter hominis (strain ATCC BAA-381 / DSM 21671 / CCUG 45161 / LMG 19568 / NCTC 13146 / CH001A).